The primary structure comprises 223 residues: MPWAVGRRWAWITLFLTIVAVLIQAVWLWLGTQSFVFQREEIAQLARQYAGLDHELAFSRLIVELRRLHPGHVLPDEELQWVFVNAGGWMGAMCLLHASLSEYVLLFGTALGSHGHSGRYWAEISDTIISGTFHQWREGTTKSEVYYPGETVVHGPGEATAVEWGPNTWMVEYGRGVIPSTLAFALSDTIFSTQDFLTLFYTLRAYARGLRLELTTYLFGQDP.

Topologically, residues 1–9 (MPWAVGRRW) are lumenal. Residues 2–8 (PWAVGRR) are targeting to endoplasmic reticulum-associated lipid droplets. Residues 10 to 30 (AWITLFLTIVAVLIQAVWLWL) form a helical membrane-spanning segment. Residues 31 to 223 (GTQSFVFQRE…LTTYLFGQDP (193 aa)) are Cytoplasmic-facing. The important for ligand-binding stretch occupies residues 99-106 (SLSEYVLL). Positions 177–223 (VIPSTLAFALSDTIFSTQDFLTLFYTLRAYARGLRLELTTYLFGQDP) are C-terminal hydrophobic region.

It belongs to the ERG2 family. In terms of assembly, homotrimer. Interacts with KCNA2; cocaine consumption leads to increased interaction. Forms a ternary complex with ANK2 and ITPR3. The complex is disrupted by agonists. Interacts with KCNA4. Interacts with RNF112 in an oxidative stress-regulated manner. As to expression, expressed in ependymocytes and neurons throughout the CNS from the olfactory bulb to the spinal cord. Expressed by progenitor, mature and satellite oligodendrocytes and by Schwann cells (at protein level). Expressed in liver, intestine, kidney, brain, lung and heart. Expressed by retinal cells.

It is found in the nucleus inner membrane. It localises to the nucleus outer membrane. Its subcellular location is the nucleus envelope. The protein localises to the cytoplasmic vesicle. The protein resides in the endoplasmic reticulum membrane. It is found in the membrane. It localises to the lipid droplet. Its subcellular location is the cell junction. The protein localises to the cell membrane. The protein resides in the cell projection. It is found in the growth cone. It localises to the postsynaptic density membrane. Functions in lipid transport from the endoplasmic reticulum and is involved in a wide array of cellular functions probably through regulation of the biogenesis of lipid microdomains at the plasma membrane. Involved in the regulation of different receptors it plays a role in BDNF signaling and EGF signaling. Also regulates ion channels like the potassium channel and could modulate neurotransmitter release. Plays a role in calcium signaling through modulation together with ANK2 of the ITP3R-dependent calcium efflux at the endoplasmic reticulum. Plays a role in several other cell functions including proliferation, survival and death. Originally identified for its ability to bind various psychoactive drugs it is involved in learning processes, memory and mood alteration. Necessary for proper mitochondrial axonal transport in motor neurons, in particular the retrograde movement of mitochondria. Plays a role in protecting cells against oxidative stress-induced cell death via its interaction with RNF112. This is Sigma non-opioid intracellular receptor 1 (Sigmar1) from Rattus norvegicus (Rat).